A 172-amino-acid polypeptide reads, in one-letter code: Galectin-related protein (172 aa).

Alanine 2 is subject to N-acetylalanine. Serine 22 and serine 25 each carry phosphoserine. Positions 39-168 constitute a Galectin domain; that stretch reads PFCGHIKGGM…TIKINGDLQI (130 aa).

In terms of assembly, monomer.

Its function is as follows. Does not bind lactose, and may not bind carbohydrates. The protein is Galectin-related protein (Lgalsl) of Mus musculus (Mouse).